A 389-amino-acid chain; its full sequence is Succinate--CoA ligase [ADP-forming] subunit beta (389 aa).

Residues 9-236 (RDMFEAHGVP…KDAADPLEAK (228 aa)) form the ATP-grasp domain. Residues Lys-45, 52-54 (GRG), Ala-94, and Glu-99 each bind ATP. Mg(2+)-binding residues include Asn-191 and Asp-205. Substrate is bound by residues Asn-256 and 318-320 (GIT).

Belongs to the succinate/malate CoA ligase beta subunit family. As to quaternary structure, heterotetramer of two alpha and two beta subunits. The cofactor is Mg(2+).

The enzyme catalyses succinate + ATP + CoA = succinyl-CoA + ADP + phosphate. It carries out the reaction GTP + succinate + CoA = succinyl-CoA + GDP + phosphate. The protein operates within carbohydrate metabolism; tricarboxylic acid cycle; succinate from succinyl-CoA (ligase route): step 1/1. Functionally, succinyl-CoA synthetase functions in the citric acid cycle (TCA), coupling the hydrolysis of succinyl-CoA to the synthesis of either ATP or GTP and thus represents the only step of substrate-level phosphorylation in the TCA. The beta subunit provides nucleotide specificity of the enzyme and binds the substrate succinate, while the binding sites for coenzyme A and phosphate are found in the alpha subunit. The chain is Succinate--CoA ligase [ADP-forming] subunit beta from Pseudarthrobacter chlorophenolicus (strain ATCC 700700 / DSM 12829 / CIP 107037 / JCM 12360 / KCTC 9906 / NCIMB 13794 / A6) (Arthrobacter chlorophenolicus).